A 468-amino-acid polypeptide reads, in one-letter code: Glutamate--tRNA ligase (468 aa).

The 'HIGH' region motif lies at 12 to 22 (PSPTGMMHIGT). The short motif at 238 to 242 (KLSKR) is the 'KMSKS' region element. Lys241 contacts ATP.

It belongs to the class-I aminoacyl-tRNA synthetase family. Glutamate--tRNA ligase type 1 subfamily. In terms of assembly, monomer.

It localises to the cytoplasm. The catalysed reaction is tRNA(Glu) + L-glutamate + ATP = L-glutamyl-tRNA(Glu) + AMP + diphosphate. Its function is as follows. Catalyzes the attachment of glutamate to tRNA(Glu) in a two-step reaction: glutamate is first activated by ATP to form Glu-AMP and then transferred to the acceptor end of tRNA(Glu). This Phenylobacterium zucineum (strain HLK1) protein is Glutamate--tRNA ligase.